We begin with the raw amino-acid sequence, 256 residues long: Trans-aconitate 2-methyltransferase (256 aa).

This sequence belongs to the methyltransferase superfamily. Tam family.

It localises to the cytoplasm. It carries out the reaction trans-aconitate + S-adenosyl-L-methionine = (E)-3-(methoxycarbonyl)pent-2-enedioate + S-adenosyl-L-homocysteine. Functionally, catalyzes the S-adenosylmethionine monomethyl esterification of trans-aconitate. The protein is Trans-aconitate 2-methyltransferase of Rhodopseudomonas palustris (strain BisB5).